Consider the following 322-residue polypeptide: Deoxycytidylate deaminase (322 aa).

Residues S173–L311 enclose the CMP/dCMP-type deaminase domain. Residue H246 coordinates Zn(2+). The active-site Proton donor is the E248. Zn(2+) contacts are provided by C273 and C276.

This sequence belongs to the cytidine and deoxycytidylate deaminase family. Zn(2+) is required as a cofactor.

The protein localises to the cytoplasm. The protein resides in the nucleus. The enzyme catalyses dCMP + H2O + H(+) = dUMP + NH4(+). Supplies the nucleotide substrate for thymidylate synthetase. The polypeptide is Deoxycytidylate deaminase (Schizosaccharomyces pombe (strain 972 / ATCC 24843) (Fission yeast)).